The primary structure comprises 48 residues: Cathepsin B (48 aa).

This sequence belongs to the peptidase C1 family. In terms of assembly, dimer of a heavy chain and a light chain cross-linked by a disulfide bond.

The protein localises to the lysosome. The catalysed reaction is Hydrolysis of proteins with broad specificity for peptide bonds. Preferentially cleaves -Arg-Arg-|-Xaa bonds in small molecule substrates (thus differing from cathepsin L). In addition to being an endopeptidase, shows peptidyl-dipeptidase activity, liberating C-terminal dipeptides.. In terms of biological role, thiol protease which is believed to participate in intracellular degradation and turnover of proteins. Has also been implicated in tumor invasion and metastasis. The protein is Cathepsin B (CTSB) of Coturnix japonica (Japanese quail).